The following is a 297-amino-acid chain: MIKQRTLKRVVQTTGVGLHTGKKVTLTLRPTSANTGIIYRRTDLYPPVDLQVNVKSVGNTVLCTCLINEYGVQIFTVEHLSAAQAGLGIDNIIIELNAPEVPIMDGSASPFVCLLLDAGIEELNSAKKFLRLKQTVRVEDGEKWAELRPFNGFTLDFTIDFNHPAINVDTQHCFFNFSSASFVHNISRARTFGFMRDIKDLQSRGFALGGSFNSAIIIDDYRVLNEDGLRFDDEFVRHKMLDAIGDLFMCGHNLIGSFIAFKSGHTLNNKLLKTVLSCQEAWELATFSNASDLPLVF.

The Zn(2+) site is built by His-79, His-238, and Asp-242. Residue His-265 is the Proton donor of the active site.

This sequence belongs to the LpxC family. It depends on Zn(2+) as a cofactor.

It carries out the reaction a UDP-3-O-[(3R)-3-hydroxyacyl]-N-acetyl-alpha-D-glucosamine + H2O = a UDP-3-O-[(3R)-3-hydroxyacyl]-alpha-D-glucosamine + acetate. It participates in glycolipid biosynthesis; lipid IV(A) biosynthesis; lipid IV(A) from (3R)-3-hydroxytetradecanoyl-[acyl-carrier-protein] and UDP-N-acetyl-alpha-D-glucosamine: step 2/6. Its function is as follows. Catalyzes the hydrolysis of UDP-3-O-myristoyl-N-acetylglucosamine to form UDP-3-O-myristoylglucosamine and acetate, the committed step in lipid A biosynthesis. This Blochmanniella pennsylvanica (strain BPEN) protein is UDP-3-O-acyl-N-acetylglucosamine deacetylase.